The chain runs to 200 residues: Mediator of RNA polymerase II transcription subunit 29 (200 aa).

Composition is skewed to low complexity over residues 1–21 and 36–48; these read MAASQQQASAASSAAGVSGPS and AQLVGPAQSGLLQ. Positions 1–48 are disordered; that stretch reads MAASQQQASAASSAAGVSGPSSAGGPGPQQQPQPPAQLVGPAQSGLLQ. At Ala-2 the chain carries N-acetylalanine.

This sequence belongs to the Mediator complex subunit 29 family. As to quaternary structure, component of the Mediator complex, which is composed of MED1, MED4, MED6, MED7, MED8, MED9, MED10, MED11, MED12, MED13, MED13L, MED14, MED15, MED16, MED17, MED18, MED19, MED20, MED21, MED22, MED23, MED24, MED25, MED26, MED27, MED29, MED30, MED31, CCNC, CDK8 and CDC2L6/CDK11. The MED12, MED13, CCNC and CDK8 subunits form a distinct module termed the CDK8 module. Mediator containing the CDK8 module is less active than Mediator lacking this module in supporting transcriptional activation. Individual preparations of the Mediator complex lacking one or more distinct subunits have been variously termed ARC, CRSP, DRIP, PC2, SMCC and TRAP. Associates with the MED18/MED20 heteromer.

The protein resides in the nucleus. In terms of biological role, component of the Mediator complex, a coactivator involved in the regulated transcription of nearly all RNA polymerase II-dependent genes. Mediator functions as a bridge to convey information from gene-specific regulatory proteins to the basal RNA polymerase II transcription machinery. Mediator is recruited to promoters by direct interactions with regulatory proteins and serves as a scaffold for the assembly of a functional preinitiation complex with RNA polymerase II and the general transcription factors. The sequence is that of Mediator of RNA polymerase II transcription subunit 29 (MED29) from Pongo abelii (Sumatran orangutan).